Here is a 208-residue protein sequence, read N- to C-terminus: Uracil phosphoribosyltransferase (208 aa).

5-phospho-alpha-D-ribose 1-diphosphate is bound by residues R78, R103, and 130-138 (DPMLATGGS). Uracil-binding positions include I193 and 198–200 (GDA). D199 contacts 5-phospho-alpha-D-ribose 1-diphosphate.

Belongs to the UPRTase family. Mg(2+) is required as a cofactor.

It carries out the reaction UMP + diphosphate = 5-phospho-alpha-D-ribose 1-diphosphate + uracil. The protein operates within pyrimidine metabolism; UMP biosynthesis via salvage pathway; UMP from uracil: step 1/1. Allosterically activated by GTP. Its function is as follows. Catalyzes the conversion of uracil and 5-phospho-alpha-D-ribose 1-diphosphate (PRPP) to UMP and diphosphate. This Klebsiella pneumoniae subsp. pneumoniae (strain ATCC 700721 / MGH 78578) protein is Uracil phosphoribosyltransferase.